Consider the following 178-residue polypeptide: CASP-like protein 4D1 (178 aa).

A2 carries the post-translational modification N-acetylalanine. The Cytoplasmic segment spans residues 2–14 (APPPPAPPSVTLR). A helical membrane pass occupies residues 15–35 (TVLLLLRVLTAAFLLITVVLI). The Extracellular segment spans residues 36–60 (STNTVTLEISSTSIKLPFNDVYAYR). Residues 61-81 (YMLSAAVIGLVYAVVQLFLTI) form a helical membrane-spanning segment. Residues 82–97 (SQFATGKTHPLTYQFD) lie on the Cytoplasmic side of the membrane. A helical membrane pass occupies residues 98–118 (FYGDKVISYLLATGSAAGFGV). At 119–149 (SKDLKDTYIALIEFDSTDPVDKFFSKGYASA) the chain is on the extracellular side. A helical membrane pass occupies residues 150–170 (SLLLFAFVSLAVLSVFSSLAL). Topologically, residues 171 to 178 (SKRPVPVS) are cytoplasmic.

This sequence belongs to the Casparian strip membrane proteins (CASP) family. Homodimer and heterodimers. Expressed in the root epidermis.

It is found in the cell membrane. The chain is CASP-like protein 4D1 from Arabidopsis thaliana (Mouse-ear cress).